The chain runs to 77 residues: Immune protein Tsi2 (77 aa).

Forms a heterotetramer with Tse2 consisting of two Tse2 dimers and two Tsi2 dimers. Formation of the complex inactivates Tse2 enzymatic activity.

Functionally, immunity protein that plays a role in preventing early activation of toxin Tse2. Binds to a large surface of Tse2 and thereby occludes the active site to specifically inhibits Tse2. In Pseudomonas aeruginosa (strain ATCC 15692 / DSM 22644 / CIP 104116 / JCM 14847 / LMG 12228 / 1C / PRS 101 / PAO1), this protein is Immune protein Tsi2.